Consider the following 296-residue polypeptide: 4-hydroxybenzoate octaprenyltransferase (296 aa).

The next 8 helical transmembrane spans lie at 28–48 (IGTLLLLWPTYWALWLASDGI), 51–71 (LAVLAAFTIGTFLMRSAGCVI), 102–122 (LLLTAFLCLLAALCLIPLNHL), 143–163 (FFPIPQFYLGLAFSFGIPMAF), 174–194 (AWILFAANVLWTLAYDTVYAM), 212–232 (FGRYDIAAVMLCHGGFTLLMA), 233–253 (VLGAVIGAAWAYWTAIPIVLL), and 274–294 (FLANNRIGWVWFAAIFAHTFF).

This sequence belongs to the UbiA prenyltransferase family. Requires Mg(2+) as cofactor.

Its subcellular location is the cell inner membrane. It carries out the reaction all-trans-octaprenyl diphosphate + 4-hydroxybenzoate = 4-hydroxy-3-(all-trans-octaprenyl)benzoate + diphosphate. It functions in the pathway cofactor biosynthesis; ubiquinone biosynthesis. Functionally, catalyzes the prenylation of para-hydroxybenzoate (PHB) with an all-trans polyprenyl group. Mediates the second step in the final reaction sequence of ubiquinone-8 (UQ-8) biosynthesis, which is the condensation of the polyisoprenoid side chain with PHB, generating the first membrane-bound Q intermediate 3-octaprenyl-4-hydroxybenzoate. The polypeptide is 4-hydroxybenzoate octaprenyltransferase (Neisseria gonorrhoeae (strain NCCP11945)).